Reading from the N-terminus, the 230-residue chain is Probable dual specificity protein phosphatase DDB_G0283417 (230 aa).

The Tyrosine-protein phosphatase domain maps to 78–230 (NNNYESINLY…LEIFEKELLF (153 aa)). Cysteine 174 functions as the Phosphocysteine intermediate in the catalytic mechanism.

The protein belongs to the protein-tyrosine phosphatase family. Non-receptor class dual specificity subfamily.

It catalyses the reaction O-phospho-L-tyrosyl-[protein] + H2O = L-tyrosyl-[protein] + phosphate. The catalysed reaction is O-phospho-L-seryl-[protein] + H2O = L-seryl-[protein] + phosphate. The enzyme catalyses O-phospho-L-threonyl-[protein] + H2O = L-threonyl-[protein] + phosphate. Its function is as follows. Has a dual specificity toward Ser/Thr and Tyr-containing proteins. The polypeptide is Probable dual specificity protein phosphatase DDB_G0283417 (Dictyostelium discoideum (Social amoeba)).